Consider the following 403-residue polypeptide: uncharacterized protein (403 aa).

Histidine 81 is a binding site for Zn(2+). Residue aspartate 83 is part of the active site. Zn(2+) is bound at residue aspartate 114. The Proton acceptor role is filled by glutamate 148. Zn(2+)-binding residues include glutamate 149, glutamate 174, and histidine 374.

This sequence belongs to the peptidase M20A family. Zn(2+) is required as a cofactor. Co(2+) serves as cofactor.

This is an uncharacterized protein from Escherichia coli O157:H7.